A 77-amino-acid polypeptide reads, in one-letter code: Large ribosomal subunit protein uL24 (77 aa).

Positions 42-61 (KKHQKPSQTNANGGVVESEG) are disordered.

The protein belongs to the universal ribosomal protein uL24 family. As to quaternary structure, part of the 50S ribosomal subunit.

One of two assembly initiator proteins, it binds directly to the 5'-end of the 23S rRNA, where it nucleates assembly of the 50S subunit. In terms of biological role, one of the proteins that surrounds the polypeptide exit tunnel on the outside of the subunit. This chain is Large ribosomal subunit protein uL24, found in Lactobacillus helveticus (strain DPC 4571).